Reading from the N-terminus, the 205-residue chain is MAQLYFYYSAMNAGKSTALLQSSYNYQERGMRTVVYTAEIDDRFGAGKVSSRIGLSSPAKLFNQNSSLFDEIRAEHEQQAIHCVLVDECQFLTRQQVYELSEVVDQLDIPVLCYGLRTDFRGELFIGSQYLLAWSDKLVELKTICFCGRKASMVLRLDQAGRPYNEGEQVVIGGNERYVSVCRKHYKEALQVDSLTAIQERHRHD.

ATP is bound by residues 9–16 and 87–90; these read SAMNAGKS and DECQ. Residue Glu88 is the Proton acceptor of the active site. Positions 145, 147, 182, and 185 each coordinate Zn(2+).

Belongs to the thymidine kinase family. As to quaternary structure, homotetramer.

It localises to the cytoplasm. It catalyses the reaction thymidine + ATP = dTMP + ADP + H(+). With respect to regulation, allosteric enzyme which is feedback inhibited by dTTP and activated by a number of dNDP and dNTP. Functionally, phosphorylates both thymidine and deoxyuridine. This chain is Thymidine kinase, found in Escherichia coli (strain K12).